We begin with the raw amino-acid sequence, 199 residues long: Potassium-transporting ATPase KdpC subunit (199 aa).

Residues 7–27 form a helical membrane-spanning segment; sequence PAIVLLLALTLLTGLAYPLAM. Residues 67–86 form a disordered region; the sequence is HGRPSATTAADPQDSSKTVP. Residues 71 to 84 are compositionally biased toward polar residues; that stretch reads SATTAADPQDSSKT.

The protein belongs to the KdpC family. The system is composed of three essential subunits: KdpA, KdpB and KdpC.

Its subcellular location is the cell inner membrane. Functionally, part of the high-affinity ATP-driven potassium transport (or Kdp) system, which catalyzes the hydrolysis of ATP coupled with the electrogenic transport of potassium into the cytoplasm. This subunit acts as a catalytic chaperone that increases the ATP-binding affinity of the ATP-hydrolyzing subunit KdpB by the formation of a transient KdpB/KdpC/ATP ternary complex. The sequence is that of Potassium-transporting ATPase KdpC subunit from Rhodopseudomonas palustris (strain BisB18).